Here is a 346-residue protein sequence, read N- to C-terminus: Methylthioribose-1-phosphate isomerase (346 aa).

Substrate is bound by residues 54-56, Arg-91, and Gln-192; that span reads RGA. Residue Asp-233 is the Proton donor of the active site. Residue 243-244 coordinates substrate; it reads NK.

This sequence belongs to the eIF-2B alpha/beta/delta subunits family. MtnA subfamily.

It carries out the reaction 5-(methylsulfanyl)-alpha-D-ribose 1-phosphate = 5-(methylsulfanyl)-D-ribulose 1-phosphate. The protein operates within amino-acid biosynthesis; L-methionine biosynthesis via salvage pathway; L-methionine from S-methyl-5-thio-alpha-D-ribose 1-phosphate: step 1/6. Functionally, catalyzes the interconversion of methylthioribose-1-phosphate (MTR-1-P) into methylthioribulose-1-phosphate (MTRu-1-P). The sequence is that of Methylthioribose-1-phosphate isomerase from Yersinia pseudotuberculosis serotype O:1b (strain IP 31758).